We begin with the raw amino-acid sequence, 399 residues long: Ectoine hydrolase (399 aa).

This sequence belongs to the peptidase M24 family.

The protein resides in the cytoplasm. The catalysed reaction is L-ectoine + H2O = (2S)-2-acetamido-4-aminobutanoate. In terms of biological role, involved in the degradation of ectoine, which allows H.elongata to utilize ectoine as both a carbon and a nitrogen source for growth. Catalyzes the hydrolysis of ectoine to N-acetyl-L-2,4-diaminobutyric acid (N-Ac-DABA). It can produce both isoforms N-gamma-acetyl-L-2,4-diaminobutyric acid (N-gamma-Ac-DABA) and N-alpha-acetyl-L-2,4-diaminobutyric acid (-Nalpha-Ac-DABA), however N-alpha-Ac-DABA is the essential substrate for the subsequent catabolic enzyme DoeB. This is Ectoine hydrolase from Halomonas elongata (strain ATCC 33173 / DSM 2581 / NBRC 15536 / NCIMB 2198 / 1H9).